The primary structure comprises 100 residues: Urease subunit gamma (100 aa).

Belongs to the urease gamma subunit family. In terms of assembly, heterotrimer of UreA (gamma), UreB (beta) and UreC (alpha) subunits. Three heterotrimers associate to form the active enzyme.

Its subcellular location is the cytoplasm. The enzyme catalyses urea + 2 H2O + H(+) = hydrogencarbonate + 2 NH4(+). Its pathway is nitrogen metabolism; urea degradation; CO(2) and NH(3) from urea (urease route): step 1/1. This is Urease subunit gamma from Photorhabdus laumondii subsp. laumondii (strain DSM 15139 / CIP 105565 / TT01) (Photorhabdus luminescens subsp. laumondii).